The primary structure comprises 400 residues: Elongation factor Tu (400 aa).

The region spanning 10–208 (KPHVNVGTIG…AMDNYIPDPQ (199 aa)) is the tr-type G domain. A G1 region spans residues 19-26 (GHIDHGKS). 19 to 26 (GHIDHGKS) is a GTP binding site. Ser26 contributes to the Mg(2+) binding site. Positions 60 to 64 (GITIN) are G2. Residues 81–84 (DCPG) form a G3 region. GTP is bound by residues 81–85 (DCPGH) and 136–139 (NKTD). The G4 stretch occupies residues 136 to 139 (NKTD). Residues 174 to 176 (SAL) are G5.

The protein belongs to the TRAFAC class translation factor GTPase superfamily. Classic translation factor GTPase family. EF-Tu/EF-1A subfamily. In terms of assembly, monomer.

The protein resides in the cytoplasm. The enzyme catalyses GTP + H2O = GDP + phosphate + H(+). In terms of biological role, GTP hydrolase that promotes the GTP-dependent binding of aminoacyl-tRNA to the A-site of ribosomes during protein biosynthesis. The sequence is that of Elongation factor Tu from Thermotoga neapolitana (strain ATCC 49049 / DSM 4359 / NBRC 107923 / NS-E).